A 136-amino-acid chain; its full sequence is 14 kDa fusion protein (136 aa).

The tract at residues 22–50 (EAWTTSRSSTGSANPSASRKPARYPRIHA) is disordered. Over residues 24–38 (WTTSRSSTGSANPSA) the composition is skewed to polar residues. Asparagine 86 is a glycosylation site (N-linked (GlcNAc...) asparagine; by host).

This sequence belongs to the poxviruses fusion protein family. Homotrimer, covalently linked.

The protein resides in the virion membrane. This protein appears to play an important role in virus penetration at the level of cell fusion. The N-terminal proximal region is essential for fusion ability. Essential in fusing the outermost of the two Golgi-derived membranes enveloping the virus with the plasma membrane, and in its subsequent release extracellularly. The polypeptide is 14 kDa fusion protein (Vaccinia virus (strain WR 65-16) (VACV)).